The chain runs to 183 residues: Glutathione-regulated potassium-efflux system ancillary protein KefG (183 aa).

This sequence belongs to the NAD(P)H dehydrogenase (quinone) family. KefG subfamily. Interacts with KefB.

It localises to the cell inner membrane. It carries out the reaction a quinone + NADH + H(+) = a quinol + NAD(+). The catalysed reaction is a quinone + NADPH + H(+) = a quinol + NADP(+). In terms of biological role, regulatory subunit of a potassium efflux system that confers protection against electrophiles. Required for full activity of KefB. This Pectobacterium carotovorum subsp. carotovorum (strain PC1) protein is Glutathione-regulated potassium-efflux system ancillary protein KefG.